We begin with the raw amino-acid sequence, 517 residues long: ATP synthase subunit alpha 2 (517 aa).

An ATP-binding site is contributed by 173 to 180 (GDRQTGKT).

The protein belongs to the ATPase alpha/beta chains family. In terms of assembly, F-type ATPases have 2 components, CF(1) - the catalytic core - and CF(0) - the membrane proton channel. CF(1) has five subunits: alpha(3), beta(3), gamma(1), delta(1), epsilon(1). CF(0) has three main subunits: a(1), b(2) and c(9-12). The alpha and beta chains form an alternating ring which encloses part of the gamma chain. CF(1) is attached to CF(0) by a central stalk formed by the gamma and epsilon chains, while a peripheral stalk is formed by the delta and b chains.

It localises to the cell inner membrane. The catalysed reaction is ATP + H2O + 4 H(+)(in) = ADP + phosphate + 5 H(+)(out). In terms of biological role, produces ATP from ADP in the presence of a proton gradient across the membrane. The alpha chain is a regulatory subunit. The chain is ATP synthase subunit alpha 2 from Legionella pneumophila subsp. pneumophila (strain Philadelphia 1 / ATCC 33152 / DSM 7513).